A 424-amino-acid polypeptide reads, in one-letter code: Gamma-glutamyl phosphate reductase (424 aa).

The protein belongs to the gamma-glutamyl phosphate reductase family.

The protein resides in the cytoplasm. The enzyme catalyses L-glutamate 5-semialdehyde + phosphate + NADP(+) = L-glutamyl 5-phosphate + NADPH + H(+). Its pathway is amino-acid biosynthesis; L-proline biosynthesis; L-glutamate 5-semialdehyde from L-glutamate: step 2/2. Its function is as follows. Catalyzes the NADPH-dependent reduction of L-glutamate 5-phosphate into L-glutamate 5-semialdehyde and phosphate. The product spontaneously undergoes cyclization to form 1-pyrroline-5-carboxylate. This chain is Gamma-glutamyl phosphate reductase, found in Parvibaculum lavamentivorans (strain DS-1 / DSM 13023 / NCIMB 13966).